Reading from the N-terminus, the 256-residue chain is Omega-amidase YafV (256 aa).

The CN hydrolase domain occupies 4–234; that stretch reads LKLTLLQQPL…AAQLDAELSL (231 aa). Catalysis depends on glutamate 42, which acts as the Proton acceptor. Residue lysine 107 is part of the active site. Cysteine 141 (nucleophile) is an active-site residue.

It belongs to the carbon-nitrogen hydrolase superfamily. NIT1/NIT2 family.

The enzyme catalyses a monoamide of a dicarboxylate + H2O = a dicarboxylate + NH4(+). Its function is as follows. Hydrolyzes alpha-ketoglutaramate (a-KGM) to alpha-ketoglutarate (alpha-KG) and ammonia (specific activity 21 umol/min/mg), has very weak activity on L-glutamine, and no activity on deaminated glutathione (dGSH) or glutathione. May function as a metabolite repair enzyme. The chain is Omega-amidase YafV from Yersinia enterocolitica.